Consider the following 96-residue polypeptide: RING finger protein Z (96 aa).

Basic and acidic residues predominate over residues 1–10; the sequence is MGNCRSKQES. A disordered region spans residues 1–21; the sequence is MGNCRSKQESHPICPNTQTPE. A lipid anchor (N-myristoyl glycine; by host) is attached at G2. An RING-type; atypical zinc finger spans residues 41–77; it reads CKCCWFADRNLINCSDHYLCLRCLNVMLRTSNLCNIC. Residues 91 to 94 carry the PTAP/PSAP motif motif; it reads PTAP.

It belongs to the arenaviridae Z protein family. Interacts with protein NP; this interaction probably directs the encapsidated genome to budding sites. Interacts (via RING domain) with polymerase L; this interaction inhibits viral transcription and replication, Z partially blocks the product exit tunnel for the releasing nascent RNA product. Interacts with the glycoprotein complex; this interaction plays a role in virion budding. Interacts with host eIF4E; this interaction results in eIF4E reduced affinity for its substrate, the 5'-m7 G cap structure. Interacts (via late-budding domain) with host TSG101; this interaction is essential for budding and release of viral particles. Interacts with host RPLP0; this interaction may serve to load ribosome-like particles inside the virion. Interacts with host PML; this interaction induces PML bodies redistribution in the cytoplasm upon viral infection. Post-translationally, myristoylation is required for the role of RING finger protein Z in assembly and budding.

Its subcellular location is the virion. The protein localises to the host cytoplasm. It localises to the host perinuclear region. It is found in the host cell membrane. Functionally, plays a crucial role in virion assembly and budding. Expressed late in the virus life cycle, it acts as an inhibitor of viral transcription and RNA synthesis by interacting with the viral polymerase L. Presumably recruits the NP encapsidated genome to cellular membranes at budding sites via direct interaction with NP. Plays critical roles in the final steps of viral release by interacting with host TSG101, a member of the vacuolar protein-sorting pathway and using other cellular host proteins involved in vesicle formation pathway. The budding of the virus progeny occurs after association of protein Z with the viral glycoprotein complex SSP-GP1-GP2 at the cell periphery, step that requires myristoylation of protein Z. Also selectively represses protein production by associating with host eIF4E. In cell-based minigenome assay, has an inhibitory effect on the ribonucleoprotein machinery (vRNP), which is responsible for the replication and transcription of the viral genome. The protein is RING finger protein Z of Hylaeamys megacephalus (Large-headed rice rat).